The primary structure comprises 214 residues: Mediator of RNA polymerase II transcription subunit 29 (214 aa).

The disordered stretch occupies residues methionine 1 to valine 78. Over residues valine 15–glycine 34 the composition is skewed to gly residues. Positions glutamine 44 to glutamine 74 are enriched in low complexity.

Belongs to the Mediator complex subunit 29 family. In terms of assembly, component of the Mediator complex.

It is found in the nucleus. Component of the Mediator complex, a coactivator involved in the regulated transcription of nearly all RNA polymerase II-dependent genes. Mediator functions as a bridge to convey information from gene-specific regulatory proteins to the basal RNA polymerase II transcription machinery. Mediator is recruited to promoters by direct interactions with regulatory proteins and serves as a scaffold for the assembly of a functional preinitiation complex with RNA polymerase II and the general transcription factors. This Aedes aegypti (Yellowfever mosquito) protein is Mediator of RNA polymerase II transcription subunit 29 (ix).